We begin with the raw amino-acid sequence, 385 residues long: Glutamate 5-kinase (385 aa).

Lys-17 is a binding site for ATP. Substrate is bound by residues Ser-64, Asp-151, and Asn-165. ATP is bound at residue 185–186 (SD). The 77-residue stretch at 291-367 (SGTVRVDAGA…NQIDNILGYN (77 aa)) folds into the PUA domain.

It belongs to the glutamate 5-kinase family.

It localises to the cytoplasm. The catalysed reaction is L-glutamate + ATP = L-glutamyl 5-phosphate + ADP. The protein operates within amino-acid biosynthesis; L-proline biosynthesis; L-glutamate 5-semialdehyde from L-glutamate: step 1/2. Catalyzes the transfer of a phosphate group to glutamate to form L-glutamate 5-phosphate. The protein is Glutamate 5-kinase of Methanosarcina acetivorans (strain ATCC 35395 / DSM 2834 / JCM 12185 / C2A).